Here is a 271-residue protein sequence, read N- to C-terminus: Cobalt import ATP-binding protein CbiO (271 aa).

Residues 2–236 form the ABC transporter domain; the sequence is LATSDLWFRY…TEAMEHAGLT (235 aa). 34-41 provides a ligand contact to ATP; sequence GANGCGKS.

This sequence belongs to the ABC transporter superfamily. Cobalt importer (TC 3.A.1.18.1) family. In terms of assembly, forms an energy-coupling factor (ECF) transporter complex composed of an ATP-binding protein (A component, CbiO), a transmembrane protein (T component, CbiQ) and 2 possible substrate-capture proteins (S components, CbiM and CbiN) of unknown stoichimetry. Expression of just CbiMN in E.coli confers some cobalt uptake.

The protein localises to the cell inner membrane. It participates in cofactor biosynthesis; adenosylcobalamin biosynthesis. Part of the energy-coupling factor (ECF) transporter complex CbiMNOQ involved in cobalt import. The complex confers cobalt uptake upon expression in E.coli; can also transport nickel with a very low affinity. Presumably responsible for energy coupling to the transport system. This Salmonella typhimurium (strain LT2 / SGSC1412 / ATCC 700720) protein is Cobalt import ATP-binding protein CbiO.